The following is a 243-amino-acid chain: Vesicle-associated membrane protein-associated protein B (243 aa).

Ala-2 is modified (N-acetylalanine). Residues 2–218 (AKVEQVLSLE…AALAASGKEE (217 aa)) lie on the Cytoplasmic side of the membrane. The 118-residue stretch at 7-124 (VLSLEPQHEL…MDSKLRCVFE (118 aa)) folds into the MSP domain. Ser-146 is subject to Phosphoserine. A Glycyl lysine isopeptide (Lys-Gly) (interchain with G-Cter in SUMO1) cross-link involves residue Lys-147. Phosphoserine is present on Ser-159. The stretch at 161-196 (LDDAEVKKVMEECRRLQGEVQRLREESRQLKEEDGL) forms a coiled coil. Ser-206 carries the phosphoserine modification. Residues 219 to 239 (GLSARLLALVVLFFIVGVIIG) traverse the membrane as a helical; Anchor for type IV membrane protein segment.

The protein belongs to the VAMP-associated protein (VAP) (TC 9.B.17) family. In terms of assembly, homodimer, and heterodimer with VAPA. Interacts with VAMP1 and VAMP2. Interacts (via MSP domain) with ZFYVE27. Interacts with RMDN3. Interacts with KIF5A in a ZFYVE27-dependent manner. Interacts (via MSP domain) with STARD3 (via phospho-FFAT motif). Interacts with STARD3NL (via FFAT motif). Interacts with CERT1. Interacts with PLEKHA3 and SACM1L to form a ternary complex. Interacts with VPS13A (via FFAT motif). Interacts with RB1CC1 (via phosphorylated FFAT motif), MIGA2 (via phosphorylated FFAT motif), RMDN3 (via phosphorylated FFAT motif), OSBPL1A (via FFAT motif), KCNB1 (via phosphorylated FFAT motif) and KCNB2 (via phosphorylated FFAT motif). Interacts (via MSP domain) with WDR44; the interactions connect the endoplasmic reticulum (ER) with the endosomal tubule. In terms of tissue distribution, ubiquitous.

It is found in the endoplasmic reticulum membrane. In terms of biological role, endoplasmic reticulum (ER)-anchored protein that mediates the formation of contact sites between the ER and endosomes via interaction with FFAT motif-containing proteins such as STARD3 or WDR44. Interacts with STARD3 in a FFAT motif phosphorylation dependent manner. Via interaction with WDR44 participates in neosynthesized protein export. Participates in the endoplasmic reticulum unfolded protein response (UPR) by inducing ERN1/IRE1 activity. Involved in cellular calcium homeostasis regulation. The sequence is that of Vesicle-associated membrane protein-associated protein B from Rattus norvegicus (Rat).